A 120-amino-acid chain; its full sequence is Fluoride-specific ion channel FluC 1 (120 aa).

2 consecutive transmembrane segments (helical) span residues 3-23 (ALLT…LNCA) and 42-62 (LGCL…VAAL). G69 and T72 together coordinate Na(+). The chain crosses the membrane as a helical span at residues 99–119 (ANLAAGVGAAVLGMAAVGWFL).

This sequence belongs to the fluoride channel Fluc/FEX (TC 1.A.43) family.

The protein localises to the cell membrane. It catalyses the reaction fluoride(in) = fluoride(out). Its activity is regulated as follows. Na(+) is not transported, but it plays an essential structural role and its presence is essential for fluoride channel function. Fluoride-specific ion channel. Important for reducing fluoride concentration in the cell, thus reducing its toxicity. In Thermobifida fusca (strain YX), this protein is Fluoride-specific ion channel FluC 1.